We begin with the raw amino-acid sequence, 427 residues long: 12-alpha,13-alpha-dihydroxyfumitremorgin C prenyltransferase (427 aa).

E94 contributes to the substrate binding site. Residues R105, K192, Y194, Y268, Q353, Y355, Y419, and Y423 each contribute to the dimethylallyl diphosphate site.

It belongs to the tryptophan dimethylallyltransferase family.

The enzyme catalyses 12alpha,13alpha-dihydroxyfumitremorgin C + dimethylallyl diphosphate = fumitremorgin B + diphosphate. The protein operates within mycotoxin biosynthesis. 12-alpha,13-alpha-dihydroxyfumitremorgin C prenyltransferase; part of the gene cluster that mediates the biosynthesis of fumitremorgins, indole alkaloids that carry not only intriguing chemical structures, but also interesting biological and pharmacological activities. The biosynthesis of fumitremorgin-type alkaloids begins by condensation of the two amino acids L-tryptophan and L-proline to brevianamide F, catalyzed by the non-ribosomal peptide synthetase ftmA. Brevianamide F is then prenylated by the prenyltransferase ftmPT1/ftmB in the presence of dimethylallyl diphosphate, resulting in the formation of tryprostatin B. The three cytochrome P450 monooxygenases, ftmP450-1/ftmC, ftmP450-2/ftmE and ftmP450-3/FtmG, are responsible for the conversion of tryprostatin B to 6-hydroxytryprostatin B, tryprostatin A to fumitremorgin C and fumitremorgin C to 12,13-dihydroxyfumitremorgin C, respectively. The putative methyltransferase ftmMT/ftmD is expected for the conversion of 6-hydroxytryprostatin B to tryprostatin A. FtmPT2/FtmH catalyzes the prenylation of 12,13-dihydroxyfumitre-morgin C in the presence of dimethylallyl diphosphate, resulting in the formation of fumitremorgin B. Fumitremorgin B is further converted to verruculogen by ftmOx1/ftmF via the insertion of an endoperoxide bond between the two prenyl moieties. In some fungal species, verruculogen is further converted to fumitremorgin A, but the enzymes involved in this step have not been identified yet. The polypeptide is 12-alpha,13-alpha-dihydroxyfumitremorgin C prenyltransferase (Aspergillus fumigatus (strain ATCC MYA-4609 / CBS 101355 / FGSC A1100 / Af293) (Neosartorya fumigata)).